The primary structure comprises 426 residues: Serine--tRNA ligase (426 aa).

Position 231–233 (231–233 (TAE)) interacts with L-serine. An ATP-binding site is contributed by 262 to 264 (RSE). Glu285 lines the L-serine pocket. Position 349–352 (349–352 (EISS)) interacts with ATP. Ser385 lines the L-serine pocket.

This sequence belongs to the class-II aminoacyl-tRNA synthetase family. Type-1 seryl-tRNA synthetase subfamily. Homodimer. The tRNA molecule binds across the dimer.

The protein resides in the cytoplasm. The enzyme catalyses tRNA(Ser) + L-serine + ATP = L-seryl-tRNA(Ser) + AMP + diphosphate + H(+). It carries out the reaction tRNA(Sec) + L-serine + ATP = L-seryl-tRNA(Sec) + AMP + diphosphate + H(+). It participates in aminoacyl-tRNA biosynthesis; selenocysteinyl-tRNA(Sec) biosynthesis; L-seryl-tRNA(Sec) from L-serine and tRNA(Sec): step 1/1. In terms of biological role, catalyzes the attachment of serine to tRNA(Ser). Is also able to aminoacylate tRNA(Sec) with serine, to form the misacylated tRNA L-seryl-tRNA(Sec), which will be further converted into selenocysteinyl-tRNA(Sec). The sequence is that of Serine--tRNA ligase from Teredinibacter turnerae (strain ATCC 39867 / T7901).